The sequence spans 342 residues: GTPase Obg (342 aa).

One can recognise an Obg domain in the interval 1 to 159 (MQFIDQAQIE…KLLRLELKLL (159 aa)). An OBG-type G domain is found at 160–330 (AEVGIIGLPN…MLQEVWGILD (171 aa)). GTP-binding positions include 166 to 173 (GLPNAGKS), 191 to 195 (FTTLI), 213 to 216 (DIPG), 280 to 283 (NKID), and 311 to 313 (SAV). Mg(2+) is bound by residues serine 173 and threonine 193.

This sequence belongs to the TRAFAC class OBG-HflX-like GTPase superfamily. OBG GTPase family. As to quaternary structure, monomer. The cofactor is Mg(2+).

It is found in the cytoplasm. Functionally, an essential GTPase which binds GTP, GDP and possibly (p)ppGpp with moderate affinity, with high nucleotide exchange rates and a fairly low GTP hydrolysis rate. Plays a role in control of the cell cycle, stress response, ribosome biogenesis and in those bacteria that undergo differentiation, in morphogenesis control. This is GTPase Obg from Trichormus variabilis (strain ATCC 29413 / PCC 7937) (Anabaena variabilis).